The primary structure comprises 150 residues: Putative pre-16S rRNA nuclease (150 aa).

This sequence belongs to the YqgF nuclease family.

The protein localises to the cytoplasm. Could be a nuclease involved in processing of the 5'-end of pre-16S rRNA. This chain is Putative pre-16S rRNA nuclease, found in Chlamydia abortus (strain DSM 27085 / S26/3) (Chlamydophila abortus).